The following is a 130-amino-acid chain: Lysozyme C (130 aa).

A C-type lysozyme domain is found at Lys1–Leu130. 4 disulfides stabilise this stretch: Cys6-Cys128, Cys30-Cys116, Cys65-Cys81, and Cys77-Cys95. Active-site residues include Glu35 and Asp53.

It belongs to the glycosyl hydrolase 22 family. As to quaternary structure, monomer.

The protein localises to the secreted. The enzyme catalyses Hydrolysis of (1-&gt;4)-beta-linkages between N-acetylmuramic acid and N-acetyl-D-glucosamine residues in a peptidoglycan and between N-acetyl-D-glucosamine residues in chitodextrins.. Lysozymes have primarily a bacteriolytic function; those in tissues and body fluids are associated with the monocyte-macrophage system and enhance the activity of immunoagents. This chain is Lysozyme C (LYZ), found in Chelonia mydas (Green sea-turtle).